The sequence spans 192 residues: Large ribosomal subunit protein bL25 (192 aa).

It belongs to the bacterial ribosomal protein bL25 family. CTC subfamily. As to quaternary structure, part of the 50S ribosomal subunit; part of the 5S rRNA/L5/L18/L25 subcomplex. Contacts the 5S rRNA. Binds to the 5S rRNA independently of L5 and L18.

This is one of the proteins that binds to the 5S RNA in the ribosome where it forms part of the central protuberance. In Solidesulfovibrio magneticus (strain ATCC 700980 / DSM 13731 / RS-1) (Desulfovibrio magneticus), this protein is Large ribosomal subunit protein bL25.